The chain runs to 83 residues: MTLFNSISSISNSTGISKHSLIGNFESNNSRSGGNSISWLGGFDGCGGCGGCGGCGGCGCGSSNLNIINVDIDIGRRRRRRCC.

It belongs to the UPF0512 family.

In Dictyostelium discoideum (Social amoeba), this protein is UPF0512 protein G.